The chain runs to 393 residues: N-acyl-phosphatidylethanolamine-hydrolyzing phospholipase D (393 aa).

The residue at position 1 (Met1) is an N-acetylmethionine. Residues 1-16 (MDENESNQSLMTSSQY) are compositionally biased toward polar residues. The interval 1-40 (MDENESNQSLMTSSQYPKEAVRKRQNSARNSGASDSSRFS) is disordered. Positions 185 and 187 each coordinate Zn(2+). An an N-acyl-1,2-diacyl-sn-glycero-3-phosphoethanolamine-binding site is contributed by Tyr188. Residues Asp189, His190, and His253 each coordinate Zn(2+). Deoxycholate is bound by residues Lys256 and Met260. Asp284 contributes to the Zn(2+) binding site. Position 321 (His321) interacts with an N-acyl-1,2-diacyl-sn-glycero-3-phosphoethanolamine. Residue His343 participates in Zn(2+) binding. Residue Ala348 coordinates deoxycholate.

It belongs to the NAPE-PLD family. In terms of assembly, homodimer. Bile acids promote the assembly of inactive monomers into an active dimer and enable catalysis. Requires Zn(2+) as cofactor. In terms of tissue distribution, widely expressed. Highest expression in brain, kidney and testis (at protein level). Expressed in adipose tissue (at protein level).

It localises to the golgi apparatus membrane. Its subcellular location is the early endosome membrane. The protein localises to the nucleus envelope. It is found in the nucleus. The protein resides in the nucleoplasm. The enzyme catalyses an N-acyl-1,2-diacyl-sn-glycero-3-phosphoethanolamine + H2O = an N-acylethanolamine + a 1,2-diacyl-sn-glycero-3-phosphate + H(+). It catalyses the reaction N-butanoyl-1-hexadecanoyl-2-(9Z,12Z-octadecadienoyl)-sn-glycero-3-phosphoethanolamine + H2O = N-butanoyl ethanolamine + 1-hexadecanoyl-2-(9Z,12Z-octadecadienoyl)-sn-glycero-3-phosphate + H(+). The catalysed reaction is N-hexanoyl-1-hexadecanoyl-2-(9Z,12Z-octadecadienoyl)-sn-glycero-3-phosphoethanolamine + H2O = N-hexanoyl ethanolamine + 1-hexadecanoyl-2-(9Z,12Z-octadecadienoyl)-sn-glycero-3-phosphate + H(+). It carries out the reaction N-octanoyl-1-hexadecanoyl-2-(9Z,12Z-octadecadienoyl)-sn-glycero-3-phosphoethanolamine + H2O = N-octanoyl ethanolamine + 1-hexadecanoyl-2-(9Z,12Z-octadecadienoyl)-sn-glycero-3-phosphate + H(+). The enzyme catalyses N-decanoyl-1-hexadecanoyl-2-(9Z,12Z-octadecadienoyl)-sn-glycero-3-phosphoethanolamine + H2O = N-decanoyl ethanolamine + 1-hexadecanoyl-2-(9Z,12Z-octadecadienoyl)-sn-glycero-3-phosphate + H(+). It catalyses the reaction N-dodecanoyl-1,2-di-(9Z-octadecenoyl)-sn-glycero-3-phosphoethanolamine + H2O = N-dodecanoylethanolamine + 1,2-di-(9Z-octadecenoyl)-sn-glycero-3-phosphate + H(+). The catalysed reaction is N-tetradecanoyl-1,2-di-(9Z-octadecenoyl)-sn-glycero-3-phosphoethanolamine + H2O = N-tetradecanoylethanolamine + 1,2-di-(9Z-octadecenoyl)-sn-glycero-3-phosphate + H(+). It carries out the reaction N-hexadecanoyl-1,2-di-(9Z-octadecenoyl)-sn-glycero-3-phosphoethanolamine + H2O = N-hexadecanoylethanolamine + 1,2-di-(9Z-octadecenoyl)-sn-glycero-3-phosphate + H(+). The enzyme catalyses N,1-dihexadecanoyl-2-(9Z,12Z-octadecadienoyl)-sn-glycero-3-phosphoethanolamine + H2O = 1-hexadecanoyl-2-(9Z,12Z-octadecadienoyl)-sn-glycero-3-phosphate + N-hexadecanoylethanolamine + H(+). It catalyses the reaction N-octadecanoyl-1,2-di-(9Z-octadecenoyl)-sn-glycero-3-phosphoethanolamine + H2O = N-octadecanoyl ethanolamine + 1,2-di-(9Z-octadecenoyl)-sn-glycero-3-phosphate + H(+). The catalysed reaction is N,1,2-tri-(9Z-octadecenoyl)-sn-glycero-3-phosphoethanolamine + H2O = N-(9Z-octadecenoyl) ethanolamine + 1,2-di-(9Z-octadecenoyl)-sn-glycero-3-phosphate + H(+). It carries out the reaction N-(5Z,8Z,11Z,14Z-eicosatetraenoyl)-1,2-diacyl-sn-glycero-3-phosphoethanolamine + H2O = N-(5Z,8Z,11Z,14Z-eicosatetraenoyl)-ethanolamine + a 1,2-diacyl-sn-glycero-3-phosphate + H(+). The enzyme catalyses N-(5Z,8Z,11Z,14Z-eicosatetraenoyl)-1,2-di-(9Z-octadecenoyl)-sn-glycero-3-phosphoethanolamine + H2O = N-(5Z,8Z,11Z,14Z-eicosatetraenoyl)-ethanolamine + 1,2-di-(9Z-octadecenoyl)-sn-glycero-3-phosphate + H(+). It catalyses the reaction 1-O-(1Z-octadecenoyl)-2-(9Z-octadecenoyl)-sn-glycero-3-phospho-N-hexadecanoyl-ethanolamine + H2O = 1-O-(1Z-octadecenoyl)-2-(9Z-octadecenoyl)-sn-glycero-3-phosphate + N-hexadecanoylethanolamine + H(+). The catalysed reaction is N,1-diacyl-sn-glycero-3-phosphoethanolamine + H2O = an N-acylethanolamine + a 1-acyl-sn-glycero-3-phosphate + H(+). It carries out the reaction N,1-dihexadecanoyl-sn-glycero-3-phosphoethanolamine + H2O = N-hexadecanoylethanolamine + 1-hexadecanoyl-sn-glycero-3-phosphate + H(+). The enzyme catalyses N-(5Z,8Z,11Z,14Z-eicosatetraenoyl)-1-(9Z-octadecenoyl)-sn-glycero-3-phosphoethanolamine + H2O = N-(5Z,8Z,11Z,14Z-eicosatetraenoyl)-ethanolamine + 1-(9Z-octadecenoyl)-sn-glycero-3-phosphate + H(+). Activated by divalent cations. Activated by bile acids and their conjugates, except for lithocholic acid which is rather inhibitory. Binding of deoxycholic acid favors the selective release of anandamide and likely other unsatured long FAEs. Inhibited by phosphatidylethanolamines. Functionally, D-type phospholipase that hydrolyzes N-acyl-phosphatidylethanolamines (NAPEs) to produce bioactive N-acylethanolamines/fatty acid ethanolamides (NAEs/FAEs) and phosphatidic acid. Cleaves the terminal phosphodiester bond of diacyl- and alkenylacyl-NAPEs, primarily playing a role in the generation of long-chain saturated and monounsaturated NAEs in the brain. May control NAPE homeostasis in dopaminergic neuron membranes and regulate neuron survival, partly through RAC1 activation. As a regulator of lipid metabolism in the adipose tissue, mediates the crosstalk between adipocytes, gut microbiota and immune cells to control body temperature and weight. In particular, regulates energy homeostasis by promoting cold-induced brown or beige adipocyte differentiation program to generate heat from fatty acids and glucose. Has limited D-type phospholipase activity toward N-acyl lyso-NAPEs. The sequence is that of N-acyl-phosphatidylethanolamine-hydrolyzing phospholipase D (NAPEPLD) from Homo sapiens (Human).